A 578-amino-acid chain; its full sequence is Maltogenic alpha-amylase (578 aa).

This sequence belongs to the glycosyl hydrolase 13 family.

The catalysed reaction is hydrolysis of (1-&gt;4)-alpha-D-glucosidic linkages in polysaccharides so as to remove successive alpha-maltose residues from the non-reducing ends of the chains.. Its function is as follows. Converts starch into maltose. In contrary to other maltogenic alpha-amylases BlmA cannot hydrolyze 1,4-alpha-glucosidic linkage next to 1,6-alpha-glucosidic linkages. The chain is Maltogenic alpha-amylase (blmA) from Bacillus licheniformis.